Reading from the N-terminus, the 125-residue chain is MALTKLGNPEAKADRSLETFPIDDTSQEIRIDCREFTCRCPITGQPDWATIRIDYRPGGRGLETKSLKLYLETFREEGIFHEHLATLIRDDLVAALAPVQLTVTVNFNARGGIALAASSTYRREA.

Cysteine 40 acts as the Thioimide intermediate in catalysis. Aspartate 47 serves as the catalytic Proton donor. Substrate contacts are provided by residues 62 to 64 (LET) and 81 to 82 (HE).

Belongs to the GTP cyclohydrolase I family. QueF type 1 subfamily.

Its subcellular location is the cytoplasm. The catalysed reaction is 7-aminomethyl-7-carbaguanine + 2 NADP(+) = 7-cyano-7-deazaguanine + 2 NADPH + 3 H(+). The protein operates within tRNA modification; tRNA-queuosine biosynthesis. In terms of biological role, catalyzes the NADPH-dependent reduction of 7-cyano-7-deazaguanine (preQ0) to 7-aminomethyl-7-deazaguanine (preQ1). The polypeptide is NADPH-dependent 7-cyano-7-deazaguanine reductase (Frankia casuarinae (strain DSM 45818 / CECT 9043 / HFP020203 / CcI3)).